Here is a 490-residue protein sequence, read N- to C-terminus: Histone-lysine N-methyltransferase, H3 lysine-9 specific (490 aa).

The region spanning 8 to 69 (YEVERIVDEK…RKRRLKGSNS (62 aa)) is the Chromo domain. 2 disordered regions span residues 61-133 (KRRL…TALT) and 150-190 (KKLG…KPRN). Over residues 102–114 (FSRELNVKKENKK) the composition is skewed to basic and acidic residues. The span at 115 to 133 (VFSSQTTKRQSRKQSTALT) shows a compositional bias: polar residues. Lys127 bears the N6,N6,N6-trimethyllysine; alternate mark. Residue Lys127 is modified to N6-methyllysine; alternate. Residues 155–168 (TRNEVKEESQKREL) are compositionally biased toward basic and acidic residues. Residues 169-185 (VSNSIKEATSPKTSSIL) are compositionally biased toward polar residues. In terms of domain architecture, Pre-SET spans 258 to 325 (SGCNCSSLGG…ECPNRVVQRG (68 aa)). Residues Cys260, Cys262, Cys268, Cys276, Cys278, Cys307, Cys311, Cys313, and Cys317 each coordinate Zn(2+). Residues 328–452 (LPLEIFKTKE…PLEELTFDYA (125 aa)) enclose the SET domain. S-adenosyl-L-methionine contacts are provided by residues 338-340 (KGW), Tyr381, Arg406, and 407-410 (FFNH). Position 412 (Cys412) interacts with Zn(2+). An autoregulatory loop region spans residues 453–472 (GAKDFSPVQSQKSQQNRISK). Lys455 is modified (N6,N6,N6-trimethyllysine; by autocatalysis; alternate). Lys455 carries the post-translational modification N6,N6-dimethyllysine; by autocatalysis; alternate. An N6-methyllysine; by autocatalysis; alternate modification is found at Lys455. The residue at position 464 (Lys464) is an N6-methyllysine. Residues 473 to 489 (LRRQCKCGSANCRGWLF) enclose the Post-SET domain. Residues Cys477, Cys479, and Cys484 each coordinate Zn(2+). Position 477–478 (477–478 (CK)) interacts with S-adenosyl-L-methionine.

It belongs to the class V-like SAM-binding methyltransferase superfamily. Histone-lysine methyltransferase family. Suvar3-9 subfamily. Component of the Clr4 methyltransferase complex (ClrC) composed of at least clr4, rik1, pcu4, rbx1, raf1 and raf2. The cullin pcu4, rik1, raf1, raf2 and the ring-box protein rbx1 are components of an E3 ubiquitin ligase, whose activity is essential for heterochromatin assembly. Interacts directly with pcu4. Interacts with mlo3. Autocatalytic methylation of specific lysine residues in an internal loop (autoregulatory loop) promote a conformational switch that enhances the H3K9me activity of clr4.

Its subcellular location is the nucleus. It localises to the cytoplasm. It is found in the cytoskeleton. The protein localises to the microtubule organizing center. The protein resides in the spindle pole body. Its subcellular location is the chromosome. The catalysed reaction is L-lysyl(9)-[histone H3] + 3 S-adenosyl-L-methionine = N(6),N(6),N(6)-trimethyl-L-lysyl(9)-[histone H3] + 3 S-adenosyl-L-homocysteine + 3 H(+). The enzyme catalyses N(6)-methyl-L-lysyl(9)-[histone H3] + S-adenosyl-L-methionine = N(6),N(6)-dimethyl-L-lysyl(9)-[histone H3] + S-adenosyl-L-homocysteine + H(+). It catalyses the reaction N(6),N(6)-dimethyl-L-lysyl(9)-[histone H3] + S-adenosyl-L-methionine = N(6),N(6),N(6)-trimethyl-L-lysyl(9)-[histone H3] + S-adenosyl-L-homocysteine + H(+). It carries out the reaction L-lysyl-[protein] + S-adenosyl-L-methionine = N(6)-methyl-L-lysyl-[protein] + S-adenosyl-L-homocysteine + H(+). The catalysed reaction is N(6)-methyl-L-lysyl-[protein] + S-adenosyl-L-methionine = N(6),N(6)-dimethyl-L-lysyl-[protein] + S-adenosyl-L-homocysteine + H(+). The enzyme catalyses N(6),N(6)-dimethyl-L-lysyl-[protein] + S-adenosyl-L-methionine = N(6),N(6),N(6)-trimethyl-L-lysyl-[protein] + S-adenosyl-L-homocysteine + H(+). It catalyses the reaction L-lysyl(9)-[histone H3] + S-adenosyl-L-methionine = N(6)-methyl-L-lysyl(9)-[histone H3] + S-adenosyl-L-homocysteine + H(+). An internal loop (autoregulatory loop) inhibits the catalytic activity of the enzyme by blocking the histone H3K9 substrate-binding pocket. Autocatalytic methylation of specific lysine residues in this loop promote a conformational switch that enhances the H3K9me activity of clr4. Its function is as follows. Histone methyltransferase which contributes to the establishment of heterochromatin by specifically methylating histone H3 to form H3K9me. Part of the Clr4 methyltransferase complex (ClrC). ClrC preferentially ubiquitylates H3K14 and ClrC-mediated H3 ubiquitination promotes clr4 methyltransferase activity. Clr4 functions as a reader and writer of H3K9 methylation. It sets the H3K9me mark and afterwards this H3K9me mark is recognized by the chromodomains of clr4 and swi6/HP1, which then recruit additional clr4 leading to the methylation of neighboring nucleosomes. H3K9me represents a specific tag for epigenetic transcriptional repression by recruiting swi6/HP1 to methylated histones which leads to transcriptional silencing within centromeric heterochromatin, telomeres, ribosomal DNA repeats, and the silent mating-type region. Clr4 methyltransferase activity promotes the assembly of a tripartite complex composed of ClrC and complexes involved in siRNA generation. Apart from H3K9, also methylates non-histone proteins such as mlo3. Interacts with mlo3 to promote the processing of centromeric and antisense RNAs. The chain is Histone-lysine N-methyltransferase, H3 lysine-9 specific (clr4) from Schizosaccharomyces pombe (strain 972 / ATCC 24843) (Fission yeast).